The primary structure comprises 24 residues: Small ribosomal subunit protein uS19 (24 aa).

A disordered region spans residues 1–24; that stretch reads KLGEFSPTRTYRGHNKKDKKMQKK. A compositionally biased stretch (basic residues) spans 11–24; it reads YRGHNKKDKKMQKK.

Belongs to the universal ribosomal protein uS19 family.

Functionally, protein S19 forms a complex with S13 that binds strongly to the 16S ribosomal RNA. In Phytoplasma sp. (strain STRAWB2), this protein is Small ribosomal subunit protein uS19.